A 294-amino-acid polypeptide reads, in one-letter code: Probable ABC transporter permease protein YqgI (294 aa).

The next 6 helical transmembrane spans lie at 14-34 (FGLC…YIII), 66-86 (FYIL…GGVF), 99-121 (FIRT…FGLL), 126-148 (LTGW…LPVM), 190-210 (IITG…ALLF), and 260-280 (AIAN…NLAA). An ABC transmembrane type-1 domain is found at 62–280 (LFNSFYILFI…ISVLVFNLAA (219 aa)).

The protein belongs to the binding-protein-dependent transport system permease family. CysTW subfamily.

It is found in the cell membrane. Part of the binding-protein-dependent transport system YqgGHIJK. Probably responsible for the translocation of the substrate across the membrane. The sequence is that of Probable ABC transporter permease protein YqgI (yqgI) from Bacillus subtilis (strain 168).